Consider the following 273-residue polypeptide: Thymidylate synthase (273 aa).

Arginine 31 is a dUMP binding site. Residue histidine 61 participates in (6R)-5,10-methylene-5,6,7,8-tetrahydrofolate binding. A dUMP-binding site is contributed by 136–137; the sequence is RR. The active-site Nucleophile is the cysteine 156. Residues 176–179, asparagine 187, and 217–219 each bind dUMP; these read RSAD and HIY. Aspartate 179 provides a ligand contact to (6R)-5,10-methylene-5,6,7,8-tetrahydrofolate. Alanine 272 provides a ligand contact to (6R)-5,10-methylene-5,6,7,8-tetrahydrofolate.

Belongs to the thymidylate synthase family. Bacterial-type ThyA subfamily. Homodimer.

Its subcellular location is the cytoplasm. It catalyses the reaction dUMP + (6R)-5,10-methylene-5,6,7,8-tetrahydrofolate = 7,8-dihydrofolate + dTMP. It functions in the pathway pyrimidine metabolism; dTTP biosynthesis. Its function is as follows. Catalyzes the reductive methylation of 2'-deoxyuridine-5'-monophosphate (dUMP) to 2'-deoxythymidine-5'-monophosphate (dTMP) while utilizing 5,10-methylenetetrahydrofolate (mTHF) as the methyl donor and reductant in the reaction, yielding dihydrofolate (DHF) as a by-product. This enzymatic reaction provides an intracellular de novo source of dTMP, an essential precursor for DNA biosynthesis. In Corynebacterium jeikeium (strain K411), this protein is Thymidylate synthase.